Reading from the N-terminus, the 138-residue chain is Small ribosomal subunit protein uS11 (138 aa).

The segment covering M1 to K12 has biased composition (low complexity). Disordered regions lie at residues M1–H27 and I119–V138. Over residues K13–K22 the composition is skewed to basic residues.

It belongs to the universal ribosomal protein uS11 family. In terms of assembly, part of the 30S ribosomal subunit. Interacts with proteins S7 and S18. Binds to IF-3.

Located on the platform of the 30S subunit, it bridges several disparate RNA helices of the 16S rRNA. Forms part of the Shine-Dalgarno cleft in the 70S ribosome. The protein is Small ribosomal subunit protein uS11 of Mycobacteroides abscessus (strain ATCC 19977 / DSM 44196 / CCUG 20993 / CIP 104536 / JCM 13569 / NCTC 13031 / TMC 1543 / L948) (Mycobacterium abscessus).